Here is a 745-residue protein sequence, read N- to C-terminus: Phosphate transporter PHO1 homolog 4 (745 aa).

An SPX domain is found at 1–290 (MRFGKEFVSQ…KRNAAKLYME (290 aa)). At 1–342 (MRFGKEFVSQ…KINKERHLIT (342 aa)) the chain is on the cytoplasmic side. Residues 343 to 363 (FSTGFFFGCGISLIVALGLII) traverse the membrane as a helical segment. Residues 364 to 383 (HARNIMGTPGQRTYMETMFP) are Extracellular-facing. The helical transmembrane segment at 384 to 404 (LYRFFGFVVLHMDVYAANIYF) threads the bilayer. Residues 405–427 (WRRYRVNYSFIFGFKQGTELGYR) are Cytoplasmic-facing. The chain crosses the membrane as a helical span at residues 428-448 (HVLLLSFGLGTLSLCAVLLNL). Over 449 to 464 (DMEMDAQTKDYRLVTE) the chain is Extracellular. The helical transmembrane segment at 465-485 (LIPLFLLVLVIIIVLCPFNIL) threads the bilayer. The Cytoplasmic segment spans residues 486–615 (YRSSRFFFLS…YTLNRGSNWN (130 aa)). The 195-residue stretch at 550-744 (TSNIGFRTFY…NYEEDGDHHN (195 aa)) folds into the EXS domain. Residues 616 to 636 (ITAWVFSGVATFYGTYWDIVL) traverse the membrane as a helical segment. Residues 637–660 (DWGLLQRGCKNSFLRDKLLVPHKT) are Extracellular-facing. Residues 661–681 (VYYAAMVLNVLLRLVWLQTVL) traverse the membrane as a helical segment. The Cytoplasmic segment spans residues 682-745 (DLKFSFLHRE…YEEDGDHHNN (64 aa)).

Belongs to the SYG1 (TC 2.A.94) family. Expressed in root epidermis and cortex, leaf hydathodes, pollen grains and stigma apex.

It is found in the cell membrane. Functionally, may transport inorganic phosphate (Pi). The protein is Phosphate transporter PHO1 homolog 4 (PHO1-H4) of Arabidopsis thaliana (Mouse-ear cress).